Consider the following 600-residue polypeptide: DNA ligase (600 aa).

Asp-259 is an ATP binding site. Residue Lys-261 is the N6-AMP-lysine intermediate of the active site. Arg-266, Arg-281, Glu-311, Phe-351, Arg-428, and Lys-434 together coordinate ATP.

It belongs to the ATP-dependent DNA ligase family. Requires Mg(2+) as cofactor.

It carries out the reaction ATP + (deoxyribonucleotide)n-3'-hydroxyl + 5'-phospho-(deoxyribonucleotide)m = (deoxyribonucleotide)n+m + AMP + diphosphate.. In terms of biological role, DNA ligase that seals nicks in double-stranded DNA during DNA replication, DNA recombination and DNA repair. The sequence is that of DNA ligase from Acidianus ambivalens (Desulfurolobus ambivalens).